The primary structure comprises 416 residues: MEFVKCLGHPEEFYNLLRFRMGGRRNFIPKMDQDSLSSSLKTCYKYLNQTSRSFAAVIQALDGDIRHAICVFYLVLRALDTVEDDMSISVEKKIPLLCNFHTFLYDPEWRFTESKEKDRQVLEDFPTISLEFRNLAEKYQTVIDDICHRMGCGMAEFVDKDVTSKQDWDKYCHYVAGLVGIGLSRLFSASEFEDPIVGEDIECANSMGLFLQKTNIIRDYLEDQQEGRKFWPQEVWGRYIKKLEDFAKPENVDVAVQCLNELITNTLQHIPDVLTYLSRLRNQSVFNFCAIPQVMAIATLAACYNNQQVFKGVVKIRKGQAVTLMMDATNMPAVKAIIYQYIEEIYHRIPNSDPSSSKTKQVISKIRTQNLPNCQLISRSHYSPIYLSFIMLLAALSWQYLSTLSQVTEDYVQREH.

NADP(+)-binding residues include R52 and R77. D80, E83, and D84 together coordinate Mg(2+). R218 is a binding site for NADP(+). Residues 284–304 (SVFNFCAIPQVMAIATLAACY) traverse the membrane as a helical segment. K315 and R317 together coordinate NADP(+). The chain crosses the membrane as a helical span at residues 384-404 (PIYLSFIMLLAALSWQYLSTL).

Belongs to the phytoene/squalene synthase family. The cofactor is Mg(2+).

It is found in the endoplasmic reticulum membrane. The catalysed reaction is 2 (2E,6E)-farnesyl diphosphate + NADPH + H(+) = squalene + 2 diphosphate + NADP(+). It catalyses the reaction 2 (2E,6E)-farnesyl diphosphate + NADH + H(+) = squalene + 2 diphosphate + NAD(+). It carries out the reaction presqualene diphosphate + NADH + H(+) = squalene + diphosphate + NAD(+). The enzyme catalyses presqualene diphosphate + NADPH + H(+) = squalene + diphosphate + NADP(+). The catalysed reaction is 2 (2E,6E)-farnesyl diphosphate = presqualene diphosphate + diphosphate. The protein operates within terpene metabolism; lanosterol biosynthesis; lanosterol from farnesyl diphosphate: step 1/3. Functionally, catalyzes the condensation of 2 farnesyl pyrophosphate (FPP) moieties to form squalene. Proceeds in two distinct steps. In the first half-reaction, two molecules of FPP react to form the stable presqualene diphosphate intermediate (PSQPP), with concomitant release of a proton and a molecule of inorganic diphosphate. In the second half-reaction, PSQPP undergoes heterolysis, isomerization, and reduction with NADPH or NADH to form squalene. It is the first committed enzyme of the sterol biosynthesis pathway. This chain is Squalene synthase (Fdft1), found in Mus musculus (Mouse).